Reading from the N-terminus, the 412-residue chain is Serine hydroxymethyltransferase (412 aa).

(6S)-5,6,7,8-tetrahydrofolate is bound by residues L121 and 125 to 127 (GHL). Residue K230 is modified to N6-(pyridoxal phosphate)lysine. Position 353-355 (353-355 (TPF)) interacts with (6S)-5,6,7,8-tetrahydrofolate.

The protein belongs to the SHMT family. In terms of assembly, homodimer. It depends on pyridoxal 5'-phosphate as a cofactor.

It is found in the cytoplasm. It carries out the reaction (6R)-5,10-methylene-5,6,7,8-tetrahydrofolate + glycine + H2O = (6S)-5,6,7,8-tetrahydrofolate + L-serine. It functions in the pathway one-carbon metabolism; tetrahydrofolate interconversion. The protein operates within amino-acid biosynthesis; glycine biosynthesis; glycine from L-serine: step 1/1. In terms of biological role, catalyzes the reversible interconversion of serine and glycine with tetrahydrofolate (THF) serving as the one-carbon carrier. This reaction serves as the major source of one-carbon groups required for the biosynthesis of purines, thymidylate, methionine, and other important biomolecules. Also exhibits THF-independent aldolase activity toward beta-hydroxyamino acids, producing glycine and aldehydes, via a retro-aldol mechanism. This chain is Serine hydroxymethyltransferase, found in Finegoldia magna (strain ATCC 29328 / DSM 20472 / WAL 2508) (Peptostreptococcus magnus).